Consider the following 213-residue polypeptide: Imidazole glycerol phosphate synthase subunit HisH (213 aa).

One can recognise a Glutamine amidotransferase type-1 domain in the interval 4 to 211 (NLGVIDYGMG…LHWLHQGAEP (208 aa)). The Nucleophile role is filled by Cys-82. Residues His-186 and Glu-188 contribute to the active site.

Heterodimer of HisH and HisF.

It localises to the cytoplasm. The enzyme catalyses 5-[(5-phospho-1-deoxy-D-ribulos-1-ylimino)methylamino]-1-(5-phospho-beta-D-ribosyl)imidazole-4-carboxamide + L-glutamine = D-erythro-1-(imidazol-4-yl)glycerol 3-phosphate + 5-amino-1-(5-phospho-beta-D-ribosyl)imidazole-4-carboxamide + L-glutamate + H(+). It carries out the reaction L-glutamine + H2O = L-glutamate + NH4(+). It functions in the pathway amino-acid biosynthesis; L-histidine biosynthesis; L-histidine from 5-phospho-alpha-D-ribose 1-diphosphate: step 5/9. Its function is as follows. IGPS catalyzes the conversion of PRFAR and glutamine to IGP, AICAR and glutamate. The HisH subunit catalyzes the hydrolysis of glutamine to glutamate and ammonia as part of the synthesis of IGP and AICAR. The resulting ammonia molecule is channeled to the active site of HisF. This chain is Imidazole glycerol phosphate synthase subunit HisH, found in Synechococcus sp. (strain CC9902).